Consider the following 758-residue polypeptide: MTIQTATLGYPRIGKNRELKKALEAFWSNQLDAEALLKTAQDIELQNWQKQLEVGIDRIGIGDLSLYDSVLDWSIRFGIIPERYRSFTGLEQYFAMARGKDGIPALEMTKWFDTNYHYLVPEISEAFQPTDFSDFLETVRRAQTLLGDRAVPIVLGPLTLLRLSRLETNLEQAVSYLRDRYLILLRELKNLGVVEVQIHEPALVLEEADSFKSFYQSTFDTLRQANLPLHLVTYFDDLGAAWPWVMELPVTCISLDFTRGHNLALLKEYGFPADKQLGVGIIDGRNIWKIRPESVLSTLETIQSITANIRLHPSSSLQFVPYDAKREVKLPEPLRDVLSFAEQKLDEVVLLARVLNSNDGTNREILMKNPELTAIQAQWKAFEQFSPVNPTVQARLRNLSVRDLERPLPYEQRRTLQPTLPPLPTTTIGSFPQTAEVRQLRVKLKRHEITQAEYEAAIDEEIAKCVRLQEEVGLDVLVHGEFERSDMVEFFGQQLSGFAFTEHGWVQSYGSRCVRPPIIYGDIARPQPMTVREFKVAQSLTDKIVKAMLTGPVTMINWSFTRTDIPRSEQAMQIALALRDEVADLEAAGAKMIQIDEPALREGLPLKAERWNEYLSWAVDAFRLAAGVAKPETQIHTHMCYSEFGDIIEHIERLDADVLSIENSRSNNETLFQITDAGYRHQVGVGVYDVHSPAVPSVEQLVQQLRTSVANLAPEQIWVNPDCGLKTRHWEEVIPSLKNMVEATKTIRQEVMQSKNNA.

Residues 17–20 (RELK) and K110 contribute to the 5-methyltetrahydropteroyltri-L-glutamate site. L-homocysteine is bound by residues 428–430 (IGS) and E481. Residues 428-430 (IGS) and E481 contribute to the L-methionine site. 5-methyltetrahydropteroyltri-L-glutamate contacts are provided by residues 512–513 (RC) and W558. D596 is an L-homocysteine binding site. D596 serves as a coordination point for L-methionine. A 5-methyltetrahydropteroyltri-L-glutamate-binding site is contributed by E602. Residues H638, C640, and E662 each contribute to the Zn(2+) site. Catalysis depends on H691, which acts as the Proton donor. C723 lines the Zn(2+) pocket.

It belongs to the vitamin-B12 independent methionine synthase family. The cofactor is Zn(2+).

The catalysed reaction is 5-methyltetrahydropteroyltri-L-glutamate + L-homocysteine = tetrahydropteroyltri-L-glutamate + L-methionine. It functions in the pathway amino-acid biosynthesis; L-methionine biosynthesis via de novo pathway; L-methionine from L-homocysteine (MetE route): step 1/1. Catalyzes the transfer of a methyl group from 5-methyltetrahydrofolate to homocysteine resulting in methionine formation. This Thermosynechococcus vestitus (strain NIES-2133 / IAM M-273 / BP-1) protein is 5-methyltetrahydropteroyltriglutamate--homocysteine methyltransferase.